Reading from the N-terminus, the 198-residue chain is Holliday junction branch migration complex subunit RuvA (198 aa).

Residues 1 to 63 form a domain I region; that stretch reads MYDYIKGQLT…EDAHLLFGFH (63 aa). A domain II region spans residues 64–142; the sequence is TEDEKDVFLK…EAPQETGNTK (79 aa). The tract at residues 143-147 is flexible linker; it reads ARSNK. A domain III region spans residues 148-198; sequence AGNTQLDEAIEALLALGYKAAELKKIRAFFEGTSETAEQYIKSALKLLMKG.

This sequence belongs to the RuvA family. In terms of assembly, homotetramer. Forms an RuvA(8)-RuvB(12)-Holliday junction (HJ) complex. HJ DNA is sandwiched between 2 RuvA tetramers; dsDNA enters through RuvA and exits via RuvB. An RuvB hexamer assembles on each DNA strand where it exits the tetramer. Each RuvB hexamer is contacted by two RuvA subunits (via domain III) on 2 adjacent RuvB subunits; this complex drives branch migration. In the full resolvosome a probable DNA-RuvA(4)-RuvB(12)-RuvC(2) complex forms which resolves the HJ.

It localises to the cytoplasm. The RuvA-RuvB-RuvC complex processes Holliday junction (HJ) DNA during genetic recombination and DNA repair, while the RuvA-RuvB complex plays an important role in the rescue of blocked DNA replication forks via replication fork reversal (RFR). RuvA specifically binds to HJ cruciform DNA, conferring on it an open structure. The RuvB hexamer acts as an ATP-dependent pump, pulling dsDNA into and through the RuvAB complex. HJ branch migration allows RuvC to scan DNA until it finds its consensus sequence, where it cleaves and resolves the cruciform DNA. This is Holliday junction branch migration complex subunit RuvA from Streptococcus pyogenes serotype M28 (strain MGAS6180).